Reading from the N-terminus, the 737-residue chain is Polyribonucleotide nucleotidyltransferase (737 aa).

Mg(2+) contacts are provided by D489 and D495. The 60-residue stretch at 556 to 615 (PKIDTIKIDVDKIKIVIGKGGETIDKIIAETGVKIDIDEEGNVSIYSSDQDAINRAKEII) folds into the KH domain. The S1 motif domain occupies 625-693 (DEVYRAKVVR…EKGRIDASMK (69 aa)). Positions 691-737 (SMKALLPRPPKPEHDEKGEKSERPHRPRHQKDHKPKKEFTETPKDSE) are disordered. The span at 700–714 (PKPEHDEKGEKSERP) shows a compositional bias: basic and acidic residues. A compositionally biased stretch (basic residues) spans 715-724 (HRPRHQKDHK). Over residues 725–737 (PKKEFTETPKDSE) the composition is skewed to basic and acidic residues.

The protein belongs to the polyribonucleotide nucleotidyltransferase family. The cofactor is Mg(2+).

The protein localises to the cytoplasm. The enzyme catalyses RNA(n+1) + phosphate = RNA(n) + a ribonucleoside 5'-diphosphate. In terms of biological role, involved in mRNA degradation. Catalyzes the phosphorolysis of single-stranded polyribonucleotides processively in the 3'- to 5'-direction. This is Polyribonucleotide nucleotidyltransferase from Streptococcus pneumoniae (strain JJA).